We begin with the raw amino-acid sequence, 433 residues long: Succinate--CoA ligase [GDP-forming] subunit beta, mitochondrial (433 aa).

Residues 1 to 38 (MASPVAIAAQAGKLLRERALRPLLAVRSQAGHLTPRRW) constitute a mitochondrion transit peptide. One can recognise an ATP-grasp domain in the interval 47–275 (KKLMSEHGVR…NAEFRQKDIF (229 aa)). Glutamine 58 contacts GTP. Residue lysine 67 is modified to N6-acetyllysine; alternate. At lysine 67 the chain carries N6-succinyllysine; alternate. Residue lysine 74 is modified to N6-acetyllysine. Position 79 is an N6-succinyllysine (lysine 79). 91–93 (GRG) is a binding site for GTP. N6-acetyllysine occurs at positions 112, 133, and 140. Position 147 (leucine 147) interacts with GTP. Serine 162 is modified (phosphoserine). N6-acetyllysine is present on lysine 201. Residue serine 217 is modified to Phosphoserine. N6-acetyllysine occurs at positions 219 and 228. Residues asparagine 244 and aspartate 258 each contribute to the Mg(2+) site. Lysine 272 carries the post-translational modification N6-acetyllysine. Asparagine 309 serves as a coordination point for substrate. Residue lysine 339 is modified to N6-succinyllysine. Position 348 is an N6-acetyllysine (lysine 348). 366 to 368 (GIV) contributes to the substrate binding site. 3 positions are modified to N6-acetyllysine: lysine 387, lysine 407, and lysine 424.

This sequence belongs to the succinate/malate CoA ligase beta subunit family. GTP-specific subunit beta subfamily. Heterodimer of an alpha and a beta subunit. The beta subunit determines specificity for GTP. It depends on Mg(2+) as a cofactor.

The protein resides in the mitochondrion. It carries out the reaction GTP + succinate + CoA = succinyl-CoA + GDP + phosphate. It functions in the pathway carbohydrate metabolism; tricarboxylic acid cycle; succinate from succinyl-CoA (ligase route): step 1/1. Its function is as follows. GTP-specific succinyl-CoA synthetase functions in the citric acid cycle (TCA), coupling the hydrolysis of succinyl-CoA to the synthesis of GTP and thus represents the only step of substrate-level phosphorylation in the TCA. The beta subunit provides nucleotide specificity of the enzyme and binds the substrate succinate, while the binding sites for coenzyme A and phosphate are found in the alpha subunit. In Mus musculus (Mouse), this protein is Succinate--CoA ligase [GDP-forming] subunit beta, mitochondrial.